Consider the following 362-residue polypeptide: Very-long-chain (3R)-3-hydroxyacyl-CoA dehydratase 3 (362 aa).

The residue at position 1 (methionine 1) is an N-acetylmethionine. At 1–149 (MENQVLTPHV…ETLTSLKKGY (149 aa)) the chain is on the cytoplasmic side. The CS domain maps to 5–94 (VLTPHVYWAQ…KESQWWERLT (90 aa)). Position 7 is a phosphothreonine (threonine 7). A coiled-coil region spans residues 111–136 (LDESDAEMELRAKEEEQLNKLRLESQ). Serine 114 and serine 135 each carry phosphoserine. The chain crosses the membrane as a helical span at residues 150–170 (LFMYNLVQFLGFSWIFVNMTV). The Lumenal portion of the chain corresponds to 171-189 (RFFILGKESFYDTFHTVAD). A helical membrane pass occupies residues 190-210 (MMYFCQMLAAVESINAAIGVT). The Cytoplasmic segment spans residues 211-212 (KS). Residues 213 to 233 (PVVPSLFQLLGRNFILFIIFG) traverse the membrane as a helical segment. The Lumenal portion of the chain corresponds to 234–242 (TMEEMQNKA). A helical transmembrane segment spans residues 243 to 263 (VVFFVFYIWSTVEIFRYPFYM). Residues 264–280 (LSCIDMDWKVLTWLRYT) are Cytoplasmic-facing. A helical transmembrane segment spans residues 281–301 (VWIPLYPMGCLAEAVSVIQSI). Catalysis depends on residues tyrosine 286 and glutamate 293. Residues 302-325 (PVFNETGRFSFTLPYPVKIKVRFS) lie on the Lumenal side of the membrane. A helical transmembrane segment spans residues 326–346 (FFLQIYLILLFLGLYVNFRYL). Topologically, residues 347 to 362 (YKQRRRRFGQKKKKIH) are cytoplasmic.

It belongs to the very long-chain fatty acids dehydratase HACD family. In terms of assembly, may interact with enzymes of the ELO family (including ELOVL1); with those enzymes that mediate condensation, the first of the four steps of the reaction cycle responsible for fatty acids elongation, may be part of a larger fatty acids elongase complex. Interacts with RAC1. Associates with internalized insulin receptor/INSR complexes on Golgi/endosomal membranes; HACD3/PTPLAD1 together with ATIC and PRKAA2/AMPK2 is proposed to be part of a signaling network regulating INSR autophosphorylation and endocytosis.

It localises to the endoplasmic reticulum membrane. It catalyses the reaction a very-long-chain (3R)-3-hydroxyacyl-CoA = a very-long-chain (2E)-enoyl-CoA + H2O. The catalysed reaction is (3R)-hydroxyhexadecanoyl-CoA = (2E)-hexadecenoyl-CoA + H2O. Its pathway is lipid metabolism; fatty acid biosynthesis. Its function is as follows. Catalyzes the third of the four reactions of the long-chain fatty acids elongation cycle. This endoplasmic reticulum-bound enzymatic process, allows the addition of two carbons to the chain of long- and very long-chain fatty acids/VLCFAs per cycle. This enzyme catalyzes the dehydration of the 3-hydroxyacyl-CoA intermediate into trans-2,3-enoyl-CoA, within each cycle of fatty acid elongation. Thereby, it participates in the production of VLCFAs of different chain lengths that are involved in multiple biological processes as precursors of membrane lipids and lipid mediators. Involved in Rac1-signaling pathways leading to the modulation of gene expression. Promotes insulin receptor/INSR autophosphorylation and is involved in INSR internalization. In Bos taurus (Bovine), this protein is Very-long-chain (3R)-3-hydroxyacyl-CoA dehydratase 3.